The sequence spans 611 residues: Menin (611 aa).

The interaction with FANCD2 stretch occupies residues 214–390; that stretch reads GVAERSWLYL…SLLETGEERT (177 aa). A disordered region spans residues 460-553; that stretch reads REAEAAEAEE…SPPPEGPVLT (94 aa). Positions 484–500 are enriched in basic and acidic residues; sequence RRESKPEEPPPPKKPAL. S487 and S544 each carry phosphoserine. A Phosphothreonine modification is found at T595.

In terms of assembly, component of the MLL-HCF complex, at least composed of KMT2A/MLL1, MEN1, ASH2L, RBBP5, DPY30, WDR5, HCFC1 and HCFC2. Component of the menin-associated histone methyltransferase complex, at least composed of KMT2B/MLL4, MEN1, ASH2L, RBBP5, DPY30 and WDR5. Interacts with POLR2B. Interacts with POLR2A phosphorylated at 'Ser-5', but not with the unphosphorylated, nor 'Ser-2' phosphorylated POLR2A forms. Interacts with FANCD2 and DBF4. Interacts with SMAD3, but not with SMAD2, nor SMAD4. Directly interacts with NFKB1, NFKB2 and RELA. Interacts with JUND (via MBM motif); inhibits the interaction of JUND with MAPK10 and the phosphorylation of JUND by MAP kinases MAPK8 and MAPK10. Interacts with KMT2A (via MBM motif). The KMT2A-MEN1 complex interacts with PSIP1 with a greater affinity as MEN1 enhances interaction of KMT2A with PSIP1. Widely expressed, with high levels in hippocampus, cerebral cortex, testis and thymus (at protein level). Also expressed at high levels in pancreatic islets, ovary and bone marrow. In the brain, highest expression in hippocampus pyramidal nerve cells (at protein level). In the testis, may be expressed in spermatogonia (at protein level). Low expression, if any, in skeletal muscle.

The protein resides in the nucleus. Essential component of a MLL/SET1 histone methyltransferase (HMT) complex, a complex that specifically methylates 'Lys-4' of histone H3 (H3K4). Functions as a transcriptional regulator. Binds to the TERT promoter and represses telomerase expression. Plays a role in TGFB1-mediated inhibition of cell-proliferation, possibly regulating SMAD3 transcriptional activity. Represses JUND-mediated transcriptional activation on AP1 sites, as well as that mediated by NFKB subunit RELA. Positively regulates HOXC8 and HOXC6 gene expression. May be involved in normal hematopoiesis through the activation of HOXA9 expression. May be involved in DNA repair. This chain is Menin (Men1), found in Mus musculus (Mouse).